Here is a 112-residue protein sequence, read N- to C-terminus: Conotoxin vil14.4 (112 aa).

The first 22 residues, 1 to 22 (MGFRVLVLVVMATTSALPFTFF), serve as a signal peptide directing secretion. Positions 23–85 (EEPGRSPFRP…FAELSVGQRR (63 aa)) are excised as a propeptide. Cystine bridges form between C91-C111 and C95-C107.

The protein belongs to the conotoxin R superfamily. Expressed by the venom duct.

The protein localises to the secreted. The polypeptide is Conotoxin vil14.4 (Conus villepinii (Villepin's cone)).